A 249-amino-acid chain; its full sequence is Protein TIFY 10B (249 aa).

One can recognise a Tify domain in the interval 113–148 (PESQSAPLTIFYGGRVMVFDDFSAEKAKEVIDLANK). The short motif at 204–229 (PIARRASLHRFLEKRKDRITSKAPYQ) is the Jas element. The short motif at 206–213 (ARRASLHR) is the Nuclear localization signal element. The tract at residues 225–249 (KAPYQIDGSAEASSKPTNPAWLSSR) is disordered. Residues 235-249 (EASSKPTNPAWLSSR) show a composition bias toward polar residues.

This sequence belongs to the TIFY/JAZ family. In terms of assembly, homo- and heterodimer. Interacts with COI1, MYC2, MYC3, MYC4, AFPH2/NINJA, TIFY10A/JAZ1, TIFY6B/JAZ3, TIFY11A/JAZ5, TIFY11B/JAZ6, TIFY5A/JAZ8, TIFY7/JAZ9, TIFY9/JAZ10, TIFY3A/JAZ11 and TIFY3B/JAZ12. Interacts with RHD6 and RSL1. As to quaternary structure, (Microbial infection) Interacts with the pathogenic Pseudomonas syringae HopZ1a protein. (Microbial infection) Acetylated by Pseudomonas syringae HopZ1a. Post-translationally, ubiquitinated. Targeted for degradation by the SCF(COI1) E3 ubiquitin ligase-proteasome pathway during jasmonate signaling. In terms of tissue distribution, expressed in cotyledons, hypocotyls, roots, sepals, petal vascular tissue and stigmas of developing flowers. Expressed in stamen filaments after jasmonic acid treatment.

The protein localises to the nucleus. In terms of biological role, repressor of jasmonate responses. Jasmonoyl-isoleucine (JA-Ile) specifically promotes COI1-TIFY10B/JAZ2 interaction. Activated by MYC2, MYC3 and MYC4 transcription factors. Interacts with and suppresses RHD6 and RSL1 transcription factor activities to negatively regulate jasmonate-stimulated root hair development. The chain is Protein TIFY 10B from Arabidopsis thaliana (Mouse-ear cress).